The sequence spans 86 residues: Small ribosomal subunit protein bS20 (86 aa).

Basic residues predominate over residues M1 to N11. A disordered region spans residues M1–N21.

It belongs to the bacterial ribosomal protein bS20 family.

Its function is as follows. Binds directly to 16S ribosomal RNA. The sequence is that of Small ribosomal subunit protein bS20 from Onion yellows phytoplasma (strain OY-M).